A 152-amino-acid polypeptide reads, in one-letter code: MSNQEQTFIAVKPDGVQRGLVGNIISRFENRGFKLVAMKLTQPGQAHLEKHYEDLNTKPFFAGLIKYMNSGPICAMVWEGKDAVKTGRTILGATNPLASAPGTIRGDFALDMGRNVCHGSDSVENAKKEIALWFKPEELNQWNHHSAAWIFE.

Residues K12, F60, R88, T94, R105, and N115 each coordinate ATP. H118 serves as the catalytic Pros-phosphohistidine intermediate.

The protein belongs to the NDK family. In terms of assembly, homotrimer. It depends on Mg(2+) as a cofactor.

It carries out the reaction a 2'-deoxyribonucleoside 5'-diphosphate + ATP = a 2'-deoxyribonucleoside 5'-triphosphate + ADP. The enzyme catalyses a ribonucleoside 5'-diphosphate + ATP = a ribonucleoside 5'-triphosphate + ADP. In terms of biological role, major role in the synthesis of nucleoside triphosphates other than ATP. The ATP gamma phosphate is transferred to the NDP beta phosphate via a ping-pong mechanism, using a phosphorylated active-site intermediate. This Neurospora crassa (strain ATCC 24698 / 74-OR23-1A / CBS 708.71 / DSM 1257 / FGSC 987) protein is Nucleoside diphosphate kinase (ndk-1).